The chain runs to 165 residues: Phosphopantetheine adenylyltransferase (165 aa).

Ser10 lines the substrate pocket. ATP contacts are provided by residues 10–11 and His18; that span reads SF. Residues Lys42, Thr79, and Arg93 each coordinate substrate. Residues 94-96, Glu104, and 129-135 contribute to the ATP site; these read GLR and VRPITAT.

This sequence belongs to the bacterial CoaD family. In terms of assembly, homohexamer. It depends on Mg(2+) as a cofactor.

It localises to the cytoplasm. It carries out the reaction (R)-4'-phosphopantetheine + ATP + H(+) = 3'-dephospho-CoA + diphosphate. It participates in cofactor biosynthesis; coenzyme A biosynthesis; CoA from (R)-pantothenate: step 4/5. Functionally, reversibly transfers an adenylyl group from ATP to 4'-phosphopantetheine, yielding dephospho-CoA (dPCoA) and pyrophosphate. The chain is Phosphopantetheine adenylyltransferase from Nitrobacter hamburgensis (strain DSM 10229 / NCIMB 13809 / X14).